Here is a 716-residue protein sequence, read N- to C-terminus: MEFKYSTLIDPEMYETEGLCDGIPVRYHNNPELEEIDCLRCHEHWRENVGPLGVYKGGLADQWNGISIAIPEALPDRLGVVSYASEFAFVHDDVIDIAQHGNEQNDDLRVGFEQMIDAGAIKYSTSGKRALQSYIAKRMLSIDRERAIISLRAWLEFIEKTGRQEERRFNNEKEFLKYRIYDVGMLFWYGLLTFAQKITIPENELTTCHELAIPAYRHMALLNDLVSWEKERASSIALGKDYCINFIFVAMEESGISEDEAKERCREEIKLATVDYLRVFDEAKDRIDLSHDTMLYLESLLYSMSGNVVWGLQSPRYYTDAKFSQRQLDWIKNGLPLEVRLEDRVFGLSPSEDRVTHQAVIENGLPESGLGKNGNSSNGVDVNKALLSAVLHEHLKGHAVFKMSDHEVKVKASNGRSLDTKVLQAPYEYITGLPSKRLREQAIDAMNVWFRVPAEKLDLIKSITTILHNASLMLDDVEDGSELRRGNPSTHTIFGLSQTINSANYQLVRALERVQKLEDSESLLVFTEELRNLYIGQSMDLYWTGNLICPTMNEYFHMVECKTGGLFRLFTRLMSLHSTSAVKVDPTTLSTRLGIYFQTRDDYKNLVSTEYTKQKGYCEDLEEGKFSLPLIHLIQAMPDNHVLRNILTQWRVTRKVTLAQKQVVLGLMEKSGSLKFTRETLASLYSGLEKSFTELEEKFGTENFQLKLILQFLRTE.

Residues 1–323 form a terpene cyclase region; the sequence is MEFKYSTLID…SPRYYTDAKF (323 aa). Asp-92 is a Mg(2+) binding site. Substrate-binding positions include Asp-92, 179–182, Asn-223, 227–231, and 316–317; these read RIYD, SWEKE, and RY. A DDXXD 1 motif is present at residues 92–96; that stretch reads DDVID. Positions 223 to 231 match the NSE/DTE motif; the sequence is NDLVSWEKE. Residues 324-713 are prenyltransferase; that stretch reads SQRQLDWIKN…FQLKLILQFL (390 aa). Isopentenyl diphosphate is bound by residues Lys-436, Arg-439, and His-468. The Mg(2+) site is built by Asp-475 and Asp-479. The DDXXD 2 signature appears at 475–479; that stretch reads DDVED. Arg-484 contacts dimethylallyl diphosphate. Arg-485 contacts isopentenyl diphosphate. Positions 562, 563, 598, 605, 615, and 625 each coordinate dimethylallyl diphosphate.

In the N-terminal section; belongs to the terpene synthase family. The protein in the C-terminal section; belongs to the FPP/GGPP synthase family. In terms of assembly, hexamer. Requires Mg(2+) as cofactor.

It catalyses the reaction isopentenyl diphosphate + (2E,6E)-farnesyl diphosphate = (2E,6E,10E)-geranylgeranyl diphosphate + diphosphate. The enzyme catalyses isopentenyl diphosphate + (2E,6E,10E)-geranylgeranyl diphosphate = (2E,6E,10E,14E)-geranylfarnesyl diphosphate + diphosphate. It carries out the reaction (2E,6E,10E,14E)-geranylfarnesyl diphosphate = astellifadiene + diphosphate. Its pathway is secondary metabolite biosynthesis; terpenoid biosynthesis. Its function is as follows. Bifunctional terpene synthase that converts dimethylallyl diphosphate (DMAPP) and isopentenyl diphosphate (IPP) into astellifadiene. The C-terminal prenyltransferase (PT) domain of EvAS catalyzes formation of geranylfarnesyl pyrophosphate (GFPP), whereas the N-terminal terpene cyclase (TC) domain catalyzes the cyclization of GFPP to astellifadiene. The sequence is that of Astellifadiene synthase from Emericella variicolor (Aspergillus stellatus).